The primary structure comprises 235 residues: Probable transcriptional regulatory protein Ccon26_04940 (235 aa).

It belongs to the TACO1 family.

The protein localises to the cytoplasm. The protein is Probable transcriptional regulatory protein Ccon26_04940 of Campylobacter concisus (strain 13826).